A 121-amino-acid chain; its full sequence is Fluoride-specific ion channel FluC 1 (121 aa).

The next 4 helical transmembrane spans lie at 3–23 (YVYI…ISFL), 35–55 (IANL…IAFF), 64–84 (AITT…LELI), and 92–112 (FITL…LCYV). Na(+) is bound by residues Gly-71 and Thr-74.

The protein belongs to the fluoride channel Fluc/FEX (TC 1.A.43) family.

The protein resides in the cell membrane. It carries out the reaction fluoride(in) = fluoride(out). Its activity is regulated as follows. Na(+) is not transported, but it plays an essential structural role and its presence is essential for fluoride channel function. Its function is as follows. Fluoride-specific ion channel. Important for reducing fluoride concentration in the cell, thus reducing its toxicity. The polypeptide is Fluoride-specific ion channel FluC 1 (Staphylococcus aureus (strain NCTC 8325 / PS 47)).